Consider the following 386-residue polypeptide: S-adenosylmethionine synthase (386 aa).

His14 lines the ATP pocket. Asp16 provides a ligand contact to Mg(2+). Glu42 serves as a coordination point for K(+). The L-methionine site is built by Glu55 and Gln98. Residues 98–108 (QSGDISQGVDG) are flexible loop. Residues 162-164 (DSK), 230-231 (RF), Asp239, 245-246 (RK), Ala262, and Lys266 contribute to the ATP site. An L-methionine-binding site is contributed by Asp239. Lys270 provides a ligand contact to L-methionine.

Belongs to the AdoMet synthase family. As to quaternary structure, homotetramer; dimer of dimers. Requires Mg(2+) as cofactor. K(+) is required as a cofactor.

The protein localises to the cytoplasm. It carries out the reaction L-methionine + ATP + H2O = S-adenosyl-L-methionine + phosphate + diphosphate. It functions in the pathway amino-acid biosynthesis; S-adenosyl-L-methionine biosynthesis; S-adenosyl-L-methionine from L-methionine: step 1/1. Functionally, catalyzes the formation of S-adenosylmethionine (AdoMet) from methionine and ATP. The overall synthetic reaction is composed of two sequential steps, AdoMet formation and the subsequent tripolyphosphate hydrolysis which occurs prior to release of AdoMet from the enzyme. This Salinibacter ruber (strain DSM 13855 / M31) protein is S-adenosylmethionine synthase.